Reading from the N-terminus, the 105-residue chain is Large ribosomal subunit protein uL18c (105 aa).

Belongs to the universal ribosomal protein uL18 family. Part of the 50S ribosomal subunit; contacts the 5S rRNA.

It localises to the plastid. It is found in the chloroplast. Functionally, binds 5S rRNA, forms part of the central protuberance of the 50S subunit. This Cyanidium caldarium (Red alga) protein is Large ribosomal subunit protein uL18c (rpl18).